The following is a 344-amino-acid chain: Methylthioribose-1-phosphate isomerase (344 aa).

Substrate-binding positions include 55-57, R98, and Q202; that span reads RGA. D243 acts as the Proton donor in catalysis. 253–254 is a substrate binding site; the sequence is NK.

This sequence belongs to the eIF-2B alpha/beta/delta subunits family. MtnA subfamily.

It catalyses the reaction 5-(methylsulfanyl)-alpha-D-ribose 1-phosphate = 5-(methylsulfanyl)-D-ribulose 1-phosphate. It functions in the pathway amino-acid biosynthesis; L-methionine biosynthesis via salvage pathway; L-methionine from S-methyl-5-thio-alpha-D-ribose 1-phosphate: step 1/6. Catalyzes the interconversion of methylthioribose-1-phosphate (MTR-1-P) into methylthioribulose-1-phosphate (MTRu-1-P). The sequence is that of Methylthioribose-1-phosphate isomerase from Gemmatimonas aurantiaca (strain DSM 14586 / JCM 11422 / NBRC 100505 / T-27).